Consider the following 326-residue polypeptide: Probable iron chelatin transport system permease protein HP_0889 (326 aa).

10 consecutive transmembrane segments (helical) span residues 7 to 27, 64 to 84, 91 to 111, 113 to 133, 142 to 162, 164 to 184, 187 to 207, 241 to 261, 275 to 295, and 301 to 321; these read IALACVILAVVVLLFGGESLS, ILALLVGASLSGSGVVMQTIF, PFLLGISSGAMLGVAMAIAVV, SNIAILAFFGAILASLAVLAM, LSLVLSGVVLSAFLSALAGAI, FFVIPQKAQAIVVWLLGSLSL, YKDCLIAFIGLSLGFIPLFLL, VASALAVSVSGTIGWIGLVIP, LLLSSLLMGAFFLLLADVVAK, and DLPVGIATSVLGAPFFLWLLF.

It belongs to the binding-protein-dependent transport system permease family. FecCD subfamily.

It localises to the cell inner membrane. Functionally, part of a binding-protein-dependent transport system for an iron chelatin; probably responsible for the translocation of the substrate across the membrane. The protein is Probable iron chelatin transport system permease protein HP_0889 of Helicobacter pylori (strain ATCC 700392 / 26695) (Campylobacter pylori).